Here is a 746-residue protein sequence, read N- to C-terminus: MNLFWPSETKKQNEIPGGDYTPGNSPSVQKGYQFLNRDIFKSCPRIMERQFGECLHNRTHLIKDLISSGNVGLGPIEIVHMSYLNKHEKEEFGEYFYVTGIEVSGPAMPVEFLEVLKSSKRISKNISNNIILTYCCFNFFSNLDIRIRYDADDTFQTTAIDCNKETTDLTMTEKMWEETFASSVIRAIITNTNPELKPPGLVECPFYVGKDTISSCKKIIELLCRFLPRSLNCGWDSTKSMQATIVNNYLMYSLKSFIAITPSLVDFTIDYLKGLTKKDPIHDIYYKTAMITILDHIETKELDMITILNETLDPLLSLLNDLPPRDADSARLMNCMSDLLNIQTNFLLNRGDYELALGVSNTSTELALDSFESWYNLARCHIKKEEYEKALFAINSMPRLRKNDGHLETMYSRFLTSNYYKKPLNGTREHYDLTAMEFTNLSGTLRNWKEDELKRQIFGRIAMINEKKIGYTKEIWDDIAIKLGPICGPQSVNLINYVSPQEVKNIKNINLIARNTIGKQLGWFSGKIYGLLMEIVNKIGWNGLLNIRTEAFMMETEFYQASNNIIDENGHIPMESRKKRFCEGWLDDLFLDLYQDLKLSKISLSNKDEKHSGLEWELLGLIMLRTWHWEDAVACLRTSIVARFDPVSCQQLLKIYLQPPKNIQEVTLLDTDTIISLLIKKISYDCRYYNYCQIFNLQLLEKLCNELGTHILRNKILLQPSIGDEIMVMIDAMLAWIADLDHTVQP.

The segment at 1–25 (MNLFWPSETKKQNEIPGGDYTPGNS) is disordered. The interval 734–746 (LAWIADLDHTVQP) is CHS5-binding.

It belongs to the CHAPS family. As to quaternary structure, component of the CHS5/6 complex composed of the 4 CHAPS proteins BCH1, BCH2, BUD7, and CHS6 as well as at least CHS5 and GTP-bound ARF1. The complex interacts with the cargo protein CHS3.

Its subcellular location is the golgi apparatus. The protein localises to the trans-Golgi network membrane. In terms of biological role, member of the CHS5-ARF1P-binding proteins (CHAPS) which mediates export of specific cargo proteins, including chitin synthase CHS3. This chain is Chitin biosynthesis protein CHS6 (CHS6), found in Saccharomyces cerevisiae (strain ATCC 204508 / S288c) (Baker's yeast).